Here is a 219-residue protein sequence, read N- to C-terminus: MHRQSVVRLSRQLGAFPLVELPPPYLAPSLHFPLNRSSVQTSNFSSTAPAAGHGKDLNKSRAVSAIHRTGPRFKLGASKYPLPKPVSPEKLEKRESTPDHGLWGFFPKDRSALSTPEYDNAHGRSWSIQELREKSWEDLHSLWWVCLKEKNRIATSNLERKRLKAGYGEWEANQRLRTIRVTQLNIKHVLRERWYAWEDAQNLYKKGYRPQNEDTEESA.

Positions 77–97 (ASKYPLPKPVSPEKLEKREST) are disordered. A compositionally biased stretch (basic and acidic residues) spans 87–97 (SPEKLEKREST).

Belongs to the universal ribosomal protein uL29 family. As to quaternary structure, component of the mitochondrial large ribosomal subunit. Mature mitochondrial ribosomes consist of a small (37S) and a large (54S) subunit. The 37S subunit contains at least 33 different proteins and 1 molecule of RNA (15S). The 54S subunit contains at least 45 different proteins and 1 molecule of RNA (21S).

It localises to the mitochondrion. The chain is Large ribosomal subunit protein uL29m (mrpl4) from Emericella nidulans (strain FGSC A4 / ATCC 38163 / CBS 112.46 / NRRL 194 / M139) (Aspergillus nidulans).